A 369-amino-acid polypeptide reads, in one-letter code: Polycomb group protein FERTILIZATION-INDEPENDENT ENDOSPERM (369 aa).

WD repeat units lie at residues 31–73 (EGKK…AISA), 81–123 (DKEE…IHKS), 126–166 (GHGD…CILI), 172–212 (GHRY…TYVE), 238–275 (IHTNYVDCNRWFGDFILSKSVDNEILLWEPQLKENSPG), 287–328 (VPMC…PVLI), and 335–368 (QSKSVIRQTAMSVDGSTILACCEDGTIWRWDVIT).

Belongs to the WD repeat ESC family. In terms of assembly, interacts directly with MEA. These two proteins are probably indirectly associated with FIS2. In plants, PcG complexes are probably composed of a member of the EZ family (CLF or MEA), FIE, and a member of the VEFS family (FIS2, VRN2 or EMF2). Component of the plant homeodomain / polycomb repressive complex 2 (PHD-PRC2) large complex during prolonged cold, composed of core PRC2 components (VRN2, EZA1, FIE and MSI1), and three related PHD finger proteins (VIL1, VIL2 and VIN3) that mediates histone H3 trimethylation on 'Lys-27' (H3K27me3). Binds to ALP1. As to expression, expressed in cauline leaves, root and stems. In the male reproductive organ, it is expressed in the developing anther; and is abundant in microspore mother cells, in microsporocytes and in the tapetum, but is absent from vascular bundles, the connective tissue and the filament. It is also absent from pollen grains at subsequent developmental stages. In the developing female reproductive organs, it is highly expressed in all cells of the young ovules primordium before archesporial differentiation. Then, it is highly expressed in the ovule sporophytic tissue and the megaspore mother cell before meiosis, but is absent from placenta or the developing carpel. Then, it decreases.

Its subcellular location is the nucleus. In terms of biological role, polycomb group (PcG) protein. PcG proteins act by forming multiprotein complexes, which are required to maintain the transcriptionally repressive state of homeotic genes throughout development. PcG proteins are not required to initiate repression, but to maintain it during later stages of development. They probably act via the methylation of histones, rendering chromatin heritably changed in its expressibility. Required to prevent the proliferation of the central cell by repressing unknown target genes before fertilization. Probably also involved in floral repression mechanism established during early plant development. Regulates the anteroposterior organization of the endosperm. Interacts with the promoter and represses the transcription of genes such as PHE1, that are paternally active and maternally silenced. This chain is Polycomb group protein FERTILIZATION-INDEPENDENT ENDOSPERM (FIE), found in Arabidopsis thaliana (Mouse-ear cress).